The chain runs to 218 residues: Small ribosomal subunit protein uS3c (218 aa).

The 72-residue stretch at 47–118 (VQKHMRVSSG…RLNIAITRVA (72 aa)) folds into the KH type-2 domain.

Belongs to the universal ribosomal protein uS3 family. Part of the 30S ribosomal subunit.

The protein localises to the plastid. It is found in the chloroplast. The chain is Small ribosomal subunit protein uS3c (rps3) from Illicium oligandrum (Star anise).